The primary structure comprises 361 residues: Queuine tRNA-ribosyltransferase (361 aa).

Residue D92 is the Proton acceptor of the active site. Substrate-binding positions include 92–96 (DSGGF), D146, Q189, and G216. An RNA binding region spans residues 247–253 (GVGKPSD). Catalysis depends on D266, which acts as the Nucleophile. An RNA binding; important for wobble base 34 recognition region spans residues 271 to 275 (TRSGR). Residues C304, C306, C309, and H335 each coordinate Zn(2+).

The protein belongs to the queuine tRNA-ribosyltransferase family. Homodimer. Within each dimer, one monomer is responsible for RNA recognition and catalysis, while the other monomer binds to the replacement base PreQ1. It depends on Zn(2+) as a cofactor.

The enzyme catalyses 7-aminomethyl-7-carbaguanine + guanosine(34) in tRNA = 7-aminomethyl-7-carbaguanosine(34) in tRNA + guanine. Its pathway is tRNA modification; tRNA-queuosine biosynthesis. Its function is as follows. Catalyzes the base-exchange of a guanine (G) residue with the queuine precursor 7-aminomethyl-7-deazaguanine (PreQ1) at position 34 (anticodon wobble position) in tRNAs with GU(N) anticodons (tRNA-Asp, -Asn, -His and -Tyr). Catalysis occurs through a double-displacement mechanism. The nucleophile active site attacks the C1' of nucleotide 34 to detach the guanine base from the RNA, forming a covalent enzyme-RNA intermediate. The proton acceptor active site deprotonates the incoming PreQ1, allowing a nucleophilic attack on the C1' of the ribose to form the product. After dissociation, two additional enzymatic reactions on the tRNA convert PreQ1 to queuine (Q), resulting in the hypermodified nucleoside queuosine (7-(((4,5-cis-dihydroxy-2-cyclopenten-1-yl)amino)methyl)-7-deazaguanosine). The polypeptide is Queuine tRNA-ribosyltransferase (Rickettsia prowazekii (strain Madrid E)).